The primary structure comprises 258 residues: DNA repair protein RecO (258 aa).

It belongs to the RecO family.

Its function is as follows. Involved in DNA repair and RecF pathway recombination. The protein is DNA repair protein RecO of Syntrophotalea carbinolica (strain DSM 2380 / NBRC 103641 / GraBd1) (Pelobacter carbinolicus).